The chain runs to 155 residues: Large ribosomal subunit protein uL30 (155 aa).

Belongs to the universal ribosomal protein uL30 family. Part of the 50S ribosomal subunit.

This is Large ribosomal subunit protein uL30 from Pyrococcus abyssi (strain GE5 / Orsay).